Here is a 325-residue protein sequence, read N- to C-terminus: DNA-directed RNA polymerase subunit alpha (325 aa).

Residues 1-231 (MQNSLLKPRI…DQLNVFAALE (231 aa)) form an alpha N-terminal domain (alpha-NTD) region. The tract at residues 246–325 (VDPILLRPVD…ENWPPAGLEK (80 aa)) is alpha C-terminal domain (alpha-CTD).

The protein belongs to the RNA polymerase alpha chain family. Homodimer. The RNAP catalytic core consists of 2 alpha, 1 beta, 1 beta' and 1 omega subunit. When a sigma factor is associated with the core the holoenzyme is formed, which can initiate transcription.

The catalysed reaction is RNA(n) + a ribonucleoside 5'-triphosphate = RNA(n+1) + diphosphate. Its function is as follows. DNA-dependent RNA polymerase catalyzes the transcription of DNA into RNA using the four ribonucleoside triphosphates as substrates. The sequence is that of DNA-directed RNA polymerase subunit alpha from Herminiimonas arsenicoxydans.